We begin with the raw amino-acid sequence, 243 residues long: ATP synthase subunit a (243 aa).

8 helical membrane-spanning segments follow: residues 28 to 48, 52 to 72, 83 to 103, 114 to 134, 141 to 161, 177 to 197, 200 to 220, and 221 to 241; these read SSLY…AGVF, VIPG…LGII, YFPL…VGML, HIVV…LIGL, FFAM…MIFL, LTAN…FVYP, LLIS…EVFI, and AMLQ…DSLF.

The protein belongs to the ATPase A chain family. In terms of assembly, F-type ATPases have 2 components, CF(1) - the catalytic core - and CF(0) - the membrane proton channel. CF(1) has five subunits: alpha(3), beta(3), gamma(1), delta(1), epsilon(1). CF(0) has three main subunits: a(1), b(2) and c(9-12). The alpha and beta chains form an alternating ring which encloses part of the gamma chain. CF(1) is attached to CF(0) by a central stalk formed by the gamma and epsilon chains, while a peripheral stalk is formed by the delta and b chains.

It is found in the cell inner membrane. In terms of biological role, key component of the proton channel; it plays a direct role in the translocation of protons across the membrane. In Neorickettsia sennetsu (strain ATCC VR-367 / Miyayama) (Ehrlichia sennetsu), this protein is ATP synthase subunit a.